The following is a 188-amino-acid chain: Holliday junction branch migration complex subunit RuvA (188 aa).

Residues 1–63 (MIEIIEGIYK…QEDMTIYGFD (63 aa)) are domain I. The domain II stretch occupies residues 64–142 (SKVKKETFEK…VVEVNEEMLE (79 aa)). Residue Glu-142 is a region of interest, flexible linker. The interval 142-188 (EAIEALVSLGYSKTQARNAVSKVLKESPNISNVSKIIKEALKILAKI) is domain III.

The protein belongs to the RuvA family. In terms of assembly, homotetramer. Forms an RuvA(8)-RuvB(12)-Holliday junction (HJ) complex. HJ DNA is sandwiched between 2 RuvA tetramers; dsDNA enters through RuvA and exits via RuvB. An RuvB hexamer assembles on each DNA strand where it exits the tetramer. Each RuvB hexamer is contacted by two RuvA subunits (via domain III) on 2 adjacent RuvB subunits; this complex drives branch migration. In the full resolvosome a probable DNA-RuvA(4)-RuvB(12)-RuvC(2) complex forms which resolves the HJ.

The protein resides in the cytoplasm. In terms of biological role, the RuvA-RuvB-RuvC complex processes Holliday junction (HJ) DNA during genetic recombination and DNA repair, while the RuvA-RuvB complex plays an important role in the rescue of blocked DNA replication forks via replication fork reversal (RFR). RuvA specifically binds to HJ cruciform DNA, conferring on it an open structure. The RuvB hexamer acts as an ATP-dependent pump, pulling dsDNA into and through the RuvAB complex. HJ branch migration allows RuvC to scan DNA until it finds its consensus sequence, where it cleaves and resolves the cruciform DNA. The sequence is that of Holliday junction branch migration complex subunit RuvA from Fervidobacterium nodosum (strain ATCC 35602 / DSM 5306 / Rt17-B1).